Consider the following 415-residue polypeptide: Ribulose bisphosphate carboxylase/oxygenase activase (415 aa).

37 to 44 is a binding site for ATP; it reads GRKGEGKT.

Belongs to the RuBisCO activase family.

Activation of RuBisCO (ribulose-1,5-bisohosphate carboxylase/oxygenase; EC 4.1.1.39) involves the ATP-dependent carboxylation of the epsilon-amino group of lysine leading to a carbamate structure. The protein is Ribulose bisphosphate carboxylase/oxygenase activase (rca) of Anabaena sp. (strain CA / ATCC 33047).